The following is a 236-amino-acid chain: Small ribosomal subunit protein uS2c (236 aa).

The protein belongs to the universal ribosomal protein uS2 family.

It is found in the plastid. It localises to the chloroplast. This chain is Small ribosomal subunit protein uS2c (rps2), found in Ipomoea purpurea (Common morning glory).